The chain runs to 374 residues: MKAVHFGAGNIGRGFIGALLVDAGYEVTFVDVNEKIIDALNERNEYKVTVAGERKETETVTNVRGINSKTNEKEAIDAIAEADIVTTAVGPTVLPYIAKTIAQGLKQRTASKPVNMIACENAIRATSQLKKDVLSHLSEEETTALLKDAGFADAAVDRIVPNVQSDDILHVTVEPFFEWVVEKPALKGDAVQLGKAVLVEDLAPYIERKLFTVNTGHAVAAYVGYRKGKKTIKEALADDYIKHRVRGALNETKAMLVEEYQFDAEAHEDYIDKILLRFQNPHLEDLVERVGRGPIRKLGPADRLVKPAKYLAEKGLHPESLAETIFDALHFYAEGDPESEELRALVDEKGYVDAFCEISKLEKDHPLVEIVAKE.

3–14 (AVHFGAGNIGRG) contributes to the NAD(+) binding site.

Belongs to the mannitol dehydrogenase family.

The catalysed reaction is D-mannitol 1-phosphate + NAD(+) = beta-D-fructose 6-phosphate + NADH + H(+). This chain is Mannitol-1-phosphate 5-dehydrogenase, found in Shouchella clausii (strain KSM-K16) (Alkalihalobacillus clausii).